Reading from the N-terminus, the 194-residue chain is Large ribosomal subunit protein uL5 (194 aa).

Belongs to the universal ribosomal protein uL5 family. Part of the 50S ribosomal subunit; part of the 5S rRNA/L5/L18/L25 subcomplex. Contacts the 5S rRNA and the P site tRNA. Forms a bridge to the 30S subunit in the 70S ribosome.

Its function is as follows. This is one of the proteins that bind and probably mediate the attachment of the 5S RNA into the large ribosomal subunit, where it forms part of the central protuberance. In the 70S ribosome it contacts protein S13 of the 30S subunit (bridge B1b), connecting the 2 subunits; this bridge is implicated in subunit movement. Contacts the P site tRNA; the 5S rRNA and some of its associated proteins might help stabilize positioning of ribosome-bound tRNAs. This chain is Large ribosomal subunit protein uL5, found in Chlorobium luteolum (strain DSM 273 / BCRC 81028 / 2530) (Pelodictyon luteolum).